Here is a 60-residue protein sequence, read N- to C-terminus: Large ribosomal subunit protein bL32 (60 aa).

This sequence belongs to the bacterial ribosomal protein bL32 family.

The protein is Large ribosomal subunit protein bL32 of Moorella thermoacetica (strain ATCC 39073 / JCM 9320).